Reading from the N-terminus, the 471-residue chain is UTP--glucose-1-phosphate uridylyltransferase (471 aa).

UTP is bound by residues 87–90, Lys101, Gln164, and Gly193; that span reads LNGG. 89 to 90 contributes to the substrate binding site; it reads GG. Substrate is bound by residues His194 and 222–224; that span reads NSD. UTP is bound by residues Asp224 and Lys362.

Belongs to the UDPGP type 1 family.

The protein resides in the cytoplasm. It catalyses the reaction alpha-D-glucose 1-phosphate + UTP + H(+) = UDP-alpha-D-glucose + diphosphate. Its function is as follows. Plays a central role as a glucosyl donor in cellular metabolic pathways. This Astragalus penduliflorus (Mountain lentil) protein is UTP--glucose-1-phosphate uridylyltransferase (UGP).